The sequence spans 402 residues: Zinc finger CCCH domain-containing protein 35 (402 aa).

2 C3H1-type zinc fingers span residues 117-144 and 152-176; these read CYSGTACPDFRKGGCKRGDACEFAHGVF and RYRTQPCKDGTACRRRVCFFAHTPD. Disordered stretches follow at residues 180–211 and 232–258; these read VLPPSQQQGSNSPRGCGGGGAGAAASPLAESY and SSPTSTLVSPPRSPPSESPPLSPDAAG. A compositionally biased stretch (polar residues) spans 183–192; sequence PSQQQGSNSP. The segment covering 232–241 has biased composition (low complexity); that stretch reads SSPTSTLVSP. The segment covering 242 to 253 has biased composition (pro residues); the sequence is PRSPPSESPPLS.

In Oryza sativa subsp. japonica (Rice), this protein is Zinc finger CCCH domain-containing protein 35.